Reading from the N-terminus, the 150-residue chain is uncharacterized protein (150 aa).

An N-terminal signal peptide occupies residues 1-22 (MVIALKRFSFLASIATLTVLNA). Cys23 carries the N-palmitoyl cysteine lipid modification. The S-diacylglycerol cysteine moiety is linked to residue Cys23.

The protein belongs to the MG067/MG068/MG395 family.

Its subcellular location is the cell membrane. This is an uncharacterized protein from Mycoplasma pneumoniae (strain ATCC 29342 / M129 / Subtype 1) (Mycoplasmoides pneumoniae).